We begin with the raw amino-acid sequence, 368 residues long: MLVPPDMMAAQTRMVYQMNRFCTERVQARMYKTATAIREICKIVQDILKEVELQEPRFISSLVECNGRFEGVEVISPNEFEIVLYLNQMGVFNFVDDGTLPGCAVLKLSDGRKRSMSLWVEFITASGYLSSRKIRARFQTLVAQACDKSVYRDMVKMVGDTSEVKLRIRERFVVQITPAFKCSGIWPRSAAHWPVPHLPWPHPNIVAEVKTEGFDLLSKESVIMQNKNNNAASMEGDAWVLSFFEAENRLLQGGCRRRCLSMLKTLRDRHLDLPGNPISAYHLKNLLLYECEKHPRDFEWDEGCIADRINGIFLQLISCLQYRRCPHYFLPALDMFKGKSPSALEQAAKQVWRLTRELLTNANAFEKL.

It belongs to the mab-21 family.

The chain is Protein mab-21-like from Drosophila melanogaster (Fruit fly).